A 254-amino-acid chain; its full sequence is Ribosomal RNA small subunit methyltransferase G (254 aa).

The interval 84–109 is insert; it reads NTESKTSLNNAETKNTNEALLTSEPF. S-adenosyl-L-methionine contacts are provided by residues glycine 115, phenylalanine 120, 171 to 172, and arginine 185; that span reads AE.

It belongs to the methyltransferase superfamily. RNA methyltransferase RsmG family.

The protein localises to the cytoplasm. Its function is as follows. Specifically methylates the N7 position of a guanine in 16S rRNA. This is Ribosomal RNA small subunit methyltransferase G from Treponema denticola (strain ATCC 35405 / DSM 14222 / CIP 103919 / JCM 8153 / KCTC 15104).